Reading from the N-terminus, the 159-residue chain is NADH-quinone oxidoreductase subunit I (159 aa).

4Fe-4S ferredoxin-type domains lie at 51–80 (RRYE…IEAD) and 90–119 (TRYD…EGPN). The [4Fe-4S] cluster site is built by Cys-60, Cys-63, Cys-66, Cys-70, Cys-99, Cys-102, Cys-105, and Cys-109.

Belongs to the complex I 23 kDa subunit family. NDH-1 is composed of 14 different subunits. Subunits NuoA, H, J, K, L, M, N constitute the membrane sector of the complex. [4Fe-4S] cluster serves as cofactor.

It is found in the cell membrane. It catalyses the reaction a quinone + NADH + 5 H(+)(in) = a quinol + NAD(+) + 4 H(+)(out). Its function is as follows. NDH-1 shuttles electrons from NADH, via FMN and iron-sulfur (Fe-S) centers, to quinones in the respiratory chain. The immediate electron acceptor for the enzyme in this species is believed to be ubiquinone. Couples the redox reaction to proton translocation (for every two electrons transferred, four hydrogen ions are translocated across the cytoplasmic membrane), and thus conserves the redox energy in a proton gradient. This is NADH-quinone oxidoreductase subunit I from Rickettsia africae (strain ESF-5).